The sequence spans 123 residues: Putative iron-sulfur cluster insertion protein ErpA (123 aa).

Residues Cys51, Cys115, and Cys117 each contribute to the iron-sulfur cluster site.

Belongs to the HesB/IscA family. Homodimer. Iron-sulfur cluster is required as a cofactor.

Functionally, required for insertion of 4Fe-4S clusters. In Burkholderia ambifaria (strain ATCC BAA-244 / DSM 16087 / CCUG 44356 / LMG 19182 / AMMD) (Burkholderia cepacia (strain AMMD)), this protein is Putative iron-sulfur cluster insertion protein ErpA.